A 445-amino-acid chain; its full sequence is Signal recognition particle 54 kDa protein (445 aa).

GTP contacts are provided by residues 102 to 109, 184 to 188, and 244 to 247; these read GVQGSGKT, DTAGR, and TKMD.

Belongs to the GTP-binding SRP family. SRP54 subfamily. As to quaternary structure, part of the signal recognition particle protein translocation system, which is composed of SRP and FtsY. Archaeal SRP consists of a 7S RNA molecule of 300 nucleotides and two protein subunits: SRP54 and SRP19.

The protein resides in the cytoplasm. It catalyses the reaction GTP + H2O = GDP + phosphate + H(+). Functionally, involved in targeting and insertion of nascent membrane proteins into the cytoplasmic membrane. Binds to the hydrophobic signal sequence of the ribosome-nascent chain (RNC) as it emerges from the ribosomes. The SRP-RNC complex is then targeted to the cytoplasmic membrane where it interacts with the SRP receptor FtsY. This chain is Signal recognition particle 54 kDa protein, found in Sulfurisphaera tokodaii (strain DSM 16993 / JCM 10545 / NBRC 100140 / 7) (Sulfolobus tokodaii).